The primary structure comprises 645 residues: Translation factor GUF1, mitochondrial (645 aa).

The tr-type G domain maps to 44 to 228 (ENYRNFSIVA…AIIDRIPPPT (185 aa)). GTP is bound by residues 53–60 (AHVDHGKS), 120–124 (DTPGH), and 174–177 (NKID).

Belongs to the TRAFAC class translation factor GTPase superfamily. Classic translation factor GTPase family. LepA subfamily.

Its subcellular location is the mitochondrion inner membrane. The catalysed reaction is GTP + H2O = GDP + phosphate + H(+). Functionally, promotes mitochondrial protein synthesis. May act as a fidelity factor of the translation reaction, by catalyzing a one-codon backward translocation of tRNAs on improperly translocated ribosomes. Binds to mitochondrial ribosomes in a GTP-dependent manner. The protein is Translation factor GUF1, mitochondrial of Saccharomyces cerevisiae (strain RM11-1a) (Baker's yeast).